A 708-amino-acid chain; its full sequence is MRPWFSSVARRLALGASLGVVALTVIPNLSCAARSVSVAETESLRRLELLRVEIARHDDLYFRKAQPEISDADYDALKQELRELESRFGRRVPRDPAALRDMGDDRVSGFPKARHRMRMLSLEKTTTESGVRAFDQALRRLVKPPAEIAYVVEPKFDGLAISATYEEGRLVRLVTRGNGEEGDDVTAAAGRIRTLPPRLAGAAWPRVVEVRGEVFLTFAEFERINRGRRENGRPTFSSPRNLAVGTLKSLEPEDREVRQLDVVFFGLGAIDGHAAPASQTQLLEWIAQWGLPSVEDARRVDSIDDAWRAVQELGGRRSHLAFPIDGAVIKLDDAVGQTAAGVSEVAPRWAIAFKYAPARVGTRVRGVALQVGRTGVITPVAELEPVALAGARITRATLHNASEMERSDLRVGDFVWIERMGEIIPAVVAVDTAQRGTVSAPFVFPRDCPGCGALLVRALDDANWRCTNDDCPARQVRKVEHYVSDEGVGIRGLGAASVEALVRSQRVREIPDLYTLTAAEVTAHTRLSAAQAARVVDAIQRSRKAPLRRVIAGLGLPGIGPAGANALGARFADLPQFAAARESDLQQVEGLRPESVRALATALSAERTQQLLARLAAAGVGAQSATADAGTLAGKEVVFTGTLPTLSRRRATELVEEAGGRVADRVTAATWRLVAGRNPASKLHQATALGVPVIEEAELLRLAEAAPE.

NAD(+)-binding positions include 71–75 (DADYD), 121–122 (SL), and Glu153. Lys155 functions as the N6-AMP-lysine intermediate in the catalytic mechanism. Residues Arg176, Glu213, Lys330, and Lys354 each coordinate NAD(+). Zn(2+) is bound by residues Cys448, Cys451, Cys466, and Cys471. The region spanning 627–708 (ADAGTLAGKE…LLRLAEAAPE (82 aa)) is the BRCT domain.

Belongs to the NAD-dependent DNA ligase family. LigA subfamily. Mg(2+) serves as cofactor. Mn(2+) is required as a cofactor.

It catalyses the reaction NAD(+) + (deoxyribonucleotide)n-3'-hydroxyl + 5'-phospho-(deoxyribonucleotide)m = (deoxyribonucleotide)n+m + AMP + beta-nicotinamide D-nucleotide.. Its function is as follows. DNA ligase that catalyzes the formation of phosphodiester linkages between 5'-phosphoryl and 3'-hydroxyl groups in double-stranded DNA using NAD as a coenzyme and as the energy source for the reaction. It is essential for DNA replication and repair of damaged DNA. This is DNA ligase 2 from Opitutus terrae (strain DSM 11246 / JCM 15787 / PB90-1).